The primary structure comprises 369 residues: Phenylalanine--tRNA ligase alpha subunit (369 aa).

Glutamate 269 is a binding site for Mg(2+).

The protein belongs to the class-II aminoacyl-tRNA synthetase family. Phe-tRNA synthetase alpha subunit type 1 subfamily. As to quaternary structure, tetramer of two alpha and two beta subunits. Mg(2+) serves as cofactor.

The protein resides in the cytoplasm. The enzyme catalyses tRNA(Phe) + L-phenylalanine + ATP = L-phenylalanyl-tRNA(Phe) + AMP + diphosphate + H(+). The protein is Phenylalanine--tRNA ligase alpha subunit of Brucella anthropi (strain ATCC 49188 / DSM 6882 / CCUG 24695 / JCM 21032 / LMG 3331 / NBRC 15819 / NCTC 12168 / Alc 37) (Ochrobactrum anthropi).